A 442-amino-acid chain; its full sequence is Protein PRRC1-A (442 aa).

The interval 1-27 (MMEESGIETTPPSTPPPSTIGTSVPAA) is disordered.

The protein belongs to the PRRC1 family.

The protein localises to the golgi apparatus. This Xenopus laevis (African clawed frog) protein is Protein PRRC1-A (prrc1-a).